Consider the following 517-residue polypeptide: Ribonuclease Y (517 aa).

The chain crosses the membrane as a helical span at residues 1 to 21 (MIESLIALIAAIVGLGIGYLV). The KH domain maps to 207–273 (LINVINIKND…TKVIELLVED (67 aa)). The HD domain maps to 333 to 426 (ALAHSLEVAH…VCAADTLSAA (94 aa)).

This sequence belongs to the RNase Y family.

The protein resides in the cell membrane. In terms of biological role, endoribonuclease that initiates mRNA decay. This chain is Ribonuclease Y, found in Campylobacter jejuni subsp. jejuni serotype O:23/36 (strain 81-176).